Here is a 378-residue protein sequence, read N- to C-terminus: Chaperone protein DnaJ (378 aa).

Residues 5–70 form the J domain; that stretch reads DYYEVLSVSR…DKKAAYDQFG (66 aa). A CR-type zinc finger spans residues 133-211; that stretch reads GLTKELRIPT…CHGEGRVEKS (79 aa). 8 residues coordinate Zn(2+): Cys-146, Cys-149, Cys-163, Cys-166, Cys-185, Cys-188, Cys-199, and Cys-202. CXXCXGXG motif repeat units lie at residues 146–153, 163–170, 185–192, and 199–206; these read CDSCDGSG, CGTCHGQG, CPTCHGRG, and CNKCHGEG.

This sequence belongs to the DnaJ family. Homodimer. Zn(2+) serves as cofactor.

It is found in the cytoplasm. Functionally, participates actively in the response to hyperosmotic and heat shock by preventing the aggregation of stress-denatured proteins and by disaggregating proteins, also in an autonomous, DnaK-independent fashion. Unfolded proteins bind initially to DnaJ; upon interaction with the DnaJ-bound protein, DnaK hydrolyzes its bound ATP, resulting in the formation of a stable complex. GrpE releases ADP from DnaK; ATP binding to DnaK triggers the release of the substrate protein, thus completing the reaction cycle. Several rounds of ATP-dependent interactions between DnaJ, DnaK and GrpE are required for fully efficient folding. Also involved, together with DnaK and GrpE, in the DNA replication of plasmids through activation of initiation proteins. The chain is Chaperone protein DnaJ from Shewanella sediminis (strain HAW-EB3).